Reading from the N-terminus, the 22-residue chain is Caerin-3.2 (22 aa).

Residue lysine 22 is modified to Lysine amide.

As to expression, expressed by the skin parotoid and/or rostral glands.

It is found in the secreted. Antibacterial peptide, that adopts an alpha helical conformation which can disrupt bacterial membranes. Each caerin displays a different antimicrobial specificity. The chain is Caerin-3.2 from Ranoidea caerulea (Green tree frog).